The primary structure comprises 391 residues: NADH-quinone oxidoreductase subunit D (391 aa).

The protein belongs to the complex I 49 kDa subunit family. As to quaternary structure, NDH-1 is composed of 14 different subunits. Subunits NuoB, C, D, E, F, and G constitute the peripheral sector of the complex.

Its subcellular location is the cell inner membrane. It catalyses the reaction a quinone + NADH + 5 H(+)(in) = a quinol + NAD(+) + 4 H(+)(out). Its function is as follows. NDH-1 shuttles electrons from NADH, via FMN and iron-sulfur (Fe-S) centers, to quinones in the respiratory chain. The immediate electron acceptor for the enzyme in this species is believed to be ubiquinone. Couples the redox reaction to proton translocation (for every two electrons transferred, four hydrogen ions are translocated across the cytoplasmic membrane), and thus conserves the redox energy in a proton gradient. The chain is NADH-quinone oxidoreductase subunit D from Rickettsia bellii (strain OSU 85-389).